Here is a 181-residue protein sequence, read N- to C-terminus: Oligoribonuclease (181 aa).

Residues 8–171 (LIWIDLEMTG…DDIRESVGEL (164 aa)) enclose the Exonuclease domain. Tyr129 is an active-site residue.

The protein belongs to the oligoribonuclease family.

It localises to the cytoplasm. Functionally, 3'-to-5' exoribonuclease specific for small oligoribonucleotides. The protein is Oligoribonuclease of Serratia proteamaculans (strain 568).